The following is a 263-amino-acid chain: Hydroxyethylthiazole kinase 1 (263 aa).

M42 serves as a coordination point for substrate. The ATP site is built by K118 and T164. Position 191 (G191) interacts with substrate.

It belongs to the Thz kinase family. The cofactor is Mg(2+).

The enzyme catalyses 5-(2-hydroxyethyl)-4-methylthiazole + ATP = 4-methyl-5-(2-phosphooxyethyl)-thiazole + ADP + H(+). It participates in cofactor biosynthesis; thiamine diphosphate biosynthesis; 4-methyl-5-(2-phosphoethyl)-thiazole from 5-(2-hydroxyethyl)-4-methylthiazole: step 1/1. Catalyzes the phosphorylation of the hydroxyl group of 4-methyl-5-beta-hydroxyethylthiazole (THZ). This is Hydroxyethylthiazole kinase 1 from Clostridium botulinum (strain ATCC 19397 / Type A).